The primary structure comprises 434 residues: MPIITDVYAREVLDSRGNPTVEVEVLTESGAFGRALVPSGASTGEHEAVELRDGDKSRYLGKGVTKAVDNVNEIIAPELIEGEFSVLEQVSIDKMMIQLDGTENKGKLGANAILGVSIAVARAAADLLGQPLYKYLGGFNGKQLPVPMMNIVNGGSHSDAPIAFQEFMVLPVGAESFKESLRWGAEIFHNLKSILKNRGLETAVGDEGGFAPKFEGTEDAVETILEAIKAVGLEPGKDVFLGFDCASSEFFEDGVYNYAKFEGENGAKRSAEEQVDYLEELVNKYPIITIEDGMDENDWDGWKVLTDRIGDKVQLVGDDLFVTNTVKLSEGIEKGIGNSILIKVNQIGTLTETFDAIEMAQKAGYTAVVSHRSGETEDTTISDIAVATNAGQIKTGSLSRTDRIAKYNQLLRIEDELYETGKFDGLKSFYNLSK.

Gln-165 is a (2R)-2-phosphoglycerate binding site. Glu-207 functions as the Proton donor in the catalytic mechanism. Asp-244, Glu-291, and Asp-318 together coordinate Mg(2+). Positions 343, 372, 373, and 394 each coordinate (2R)-2-phosphoglycerate. Lys-343 (proton acceptor) is an active-site residue.

This sequence belongs to the enolase family. Mg(2+) is required as a cofactor.

It localises to the cytoplasm. Its subcellular location is the secreted. It is found in the cell surface. It carries out the reaction (2R)-2-phosphoglycerate = phosphoenolpyruvate + H2O. It functions in the pathway carbohydrate degradation; glycolysis; pyruvate from D-glyceraldehyde 3-phosphate: step 4/5. In terms of biological role, catalyzes the reversible conversion of 2-phosphoglycerate (2-PG) into phosphoenolpyruvate (PEP). It is essential for the degradation of carbohydrates via glycolysis. The sequence is that of Enolase from Staphylococcus saprophyticus subsp. saprophyticus (strain ATCC 15305 / DSM 20229 / NCIMB 8711 / NCTC 7292 / S-41).